The sequence spans 409 residues: Phosphoglycerate kinase (409 aa).

Substrate is bound by residues 23–25 (DIN), 63–66 (HQSR), Arg120, and Arg160. ATP is bound by residues Glu333 and 359 to 362 (GGHL).

This sequence belongs to the phosphoglycerate kinase family. Monomer.

It is found in the cytoplasm. The enzyme catalyses (2R)-3-phosphoglycerate + ATP = (2R)-3-phospho-glyceroyl phosphate + ADP. Its pathway is carbohydrate degradation; glycolysis; pyruvate from D-glyceraldehyde 3-phosphate: step 2/5. The sequence is that of Phosphoglycerate kinase (pgk) from Methanobacterium bryantii.